Reading from the N-terminus, the 519-residue chain is Transmembrane protein 180 (519 aa).

Over 1–11 (MGLDWPQAWLL) the chain is Extracellular. The helical transmembrane segment at 12–43 (GLPIAVVYGSLALFTSILHNVFLLYYVDTFVS) threads the bilayer. At 44–55 (VYKINKVSFWVG) the chain is on the cytoplasmic side. Residues 56 to 74 (ETVFLLWNSFNDPLFGWLS) traverse the membrane as a helical segment. Over 75–100 (DRQLLSSQPRSGAGLSSRDVVLTRVR) the chain is Extracellular. The chain crosses the membrane as a helical span at residues 101 to 118 (ALGWHGPLLALSFLAFWV). At 119 to 126 (PWAPAGLQ) the chain is on the cytoplasmic side. Residues 127–151 (FLLCLCLYDGFLTLVDLHHHALLAD) traverse the membrane as a helical segment. The Extracellular segment spans residues 152-155 (LALS). The chain crosses the membrane as a helical span at residues 156-179 (SHDRTHLNFYCSLFSAAGSLSVFA). Residues 180–191 (SYAFWNKEDFSS) are Cytoplasmic-facing. The helical transmembrane segment at 192 to 223 (FRAFCVVLAAGSGLGFLGTTQLLKRQIEATRR) threads the bilayer. Topologically, residues 224 to 264 (DRGCPGLDLDGGVCEEEPPVGGEEAGNITLGQYLRQLARHQ) are extracellular. Asparagine 250 is a glycosylation site (N-linked (GlcNAc...) asparagine). The helical transmembrane segment at 265–292 (NFLWFVGMDLVQVFHCHFNSNFFPLFLE) threads the bilayer. Residues 293-305 (HLLSDHISLSTGS) are Cytoplasmic-facing. A helical transmembrane segment spans residues 306-325 (FLLGISYVAPHLNNLYFLPL). The Extracellular portion of the chain corresponds to 326–330 (CRRWG). The helical transmembrane segment at 331–350 (VYAVVRGLFLLKLSLSLLML) threads the bilayer. Residues 351–358 (LAGPDHPG) are Cytoplasmic-facing. The helical transmembrane segment at 359–393 (LLCFFIASNRVFTEGTCKLLTLVVTDLVDEDLVLN) threads the bilayer. Topologically, residues 394–402 (HRKQAASAL) are extracellular. A helical transmembrane segment spans residues 403 to 429 (LFGMVALVTKPGQTFAPLLGTWLLCFY). At 430-468 (TGHDLFQQSPMTPVGSVRPWPELPAPAPAPAQAPTLRQG) the chain is on the cytoplasmic side. Residues 469 to 487 (CFYLLVFVPITCALLQLFT) form a helical membrane-spanning segment. Residues 488 to 519 (WSQFTLHGRRLRTVKAQRQNLAQIHTLNIKMV) lie on the Extracellular side of the membrane.

Its subcellular location is the cell membrane. The polypeptide is Transmembrane protein 180 (Mus musculus (Mouse)).